We begin with the raw amino-acid sequence, 398 residues long: Metallophosphoesterase 1 (398 aa).

Residues 25–45 (VCFVSSVLIFCEFFIYYLVIF) form a helical membrane-spanning segment. Residues Asp-75, Asp-117, Asn-155, His-251, His-305, and His-307 each contribute to the a divalent metal cation site. Residues 359-379 (VFAIYWAAGALLVVLVLAHFQ) form a helical membrane-spanning segment. Residues 394 to 398 (KHKAA) carry the Di-lysine motif motif.

The protein belongs to the metallophosphoesterase superfamily. MPPE1 family. Mn(2+) is required as a cofactor.

It is found in the endoplasmic reticulum-Golgi intermediate compartment membrane. Functionally, metallophosphoesterase that catalyzes the removal of a side-chain ethanolamine-phosphate (EtNP) from the second mannose of the GPI-anchor protein intermediate. Participates in the glycan remodeling steps of GPI-anchor maturation to allow an efficient transport of GPI-anchor proteins from the endoplasmic reticulum to the Golgi. This chain is Metallophosphoesterase 1, found in Gallus gallus (Chicken).